Here is a 208-residue protein sequence, read N- to C-terminus: Large ribosomal subunit protein uL3 (208 aa).

Residues 116 to 148 (GFQGVIKRHGQSRGPMAHGSRYHRRPGSMGPVA) form a disordered region.

It belongs to the universal ribosomal protein uL3 family. Part of the 50S ribosomal subunit. Forms a cluster with proteins L14 and L19.

One of the primary rRNA binding proteins, it binds directly near the 3'-end of the 23S rRNA, where it nucleates assembly of the 50S subunit. The protein is Large ribosomal subunit protein uL3 of Streptococcus agalactiae serotype Ia (strain ATCC 27591 / A909 / CDC SS700).